We begin with the raw amino-acid sequence, 154 residues long: Putative nuclear shuttle protein (154 aa).

The protein belongs to the nanoviridae nuclear shuttle protein family.

It localises to the host nucleus. Its subcellular location is the host cytoplasm. In terms of biological role, putative nuclear shuttle protein. The protein is Putative nuclear shuttle protein (DNA-N) of Musa (BBTV).